Consider the following 754-residue polypeptide: Peptidyl-prolyl cis-trans isomerase G (754 aa).

Residues 11-176 form the PPIase cyclophilin-type domain; sequence FFDIAINNQP…AEVRILSCGE (166 aa). Positions 182–193 are enriched in basic residues; sequence KVKKEEKKRHKS. Positions 182-754 are disordered; sequence KVKKEEKKRH…SPGTDEDKSG (573 aa). Positions 194–216 are enriched in low complexity; that stretch reads SSSSSSSSSDSDSSSDSQSSSDS. Basic residues predominate over residues 228–253; it reads KKRKKKHRKNSRKHKKEKKKRKKSKK. Residues serine 254, serine 256, serine 257, serine 259, and serine 290 each carry the phosphoserine modification. Residues 292–310 are compositionally biased toward basic and acidic residues; it reads PKADEKERKNREREREREC. Serine 315 carries the phosphoserine modification. The span at 329–347 shows a compositional bias: basic residues; that stretch reads SGRKIKGRGPRRYRTPSRS. Composition is skewed to basic and acidic residues over residues 348-368 and 379-449; these read RSRDRFRRSETPPHWRQEMQR and RWIK…DKYK. A Phosphoserine modification is found at serine 356. Threonine 358 carries the phosphothreonine modification. The residue at position 386 (serine 386) is a Phosphoserine. Residue lysine 392 forms a Glycyl lysine isopeptide (Lys-Gly) (interchain with G-Cter in SUMO2) linkage. Residues serine 397, serine 413, and serine 415 each carry the phosphoserine modification. Residues 450–462 show a composition bias toward basic residues; sequence NKVKKRAKSKSRS. Basic and acidic residues-rich tracts occupy residues 463-553 and 578-599; these read KSKE…DITK and RTHDRDRSRSKEYHRYREQEYR. The span at 616-627 shows a compositional bias: basic residues; sequence SRSKDRRRRRRD. Positions 628 to 686 are enriched in basic and acidic residues; sequence SRSSEREESQSRNKDKYRNQESKSSHRKENSESEKRMYSKSRDHNSSNNSREKKADRDQ. A phosphoserine mark is found at serine 687 and serine 690. Positions 687–698 are enriched in polar residues; it reads SPFSKIKQSSQD. Lysine 693 is covalently cross-linked (Glycyl lysine isopeptide (Lys-Gly) (interchain with G-Cter in SUMO2)). Phosphoserine is present on residues serine 696, serine 744, and serine 745. The span at 707–754 shows a compositional bias: basic and acidic residues; sequence KNKEDEKIRSSVEKENQKSKGQENDHVHEKNKKFDHESSPGTDEDKSG. Threonine 748 is modified (phosphothreonine). Serine 753 is modified (phosphoserine).

As to quaternary structure, interacts with CLK1, PNN and with the phosphorylated C-terminal domain of RNA polymerase II. As to expression, ubiquitous.

Its subcellular location is the nucleus matrix. The protein resides in the nucleus speckle. It carries out the reaction [protein]-peptidylproline (omega=180) = [protein]-peptidylproline (omega=0). Its activity is regulated as follows. Inhibited by cyclosporin A (CsA). Its function is as follows. PPIase that catalyzes the cis-trans isomerization of proline imidic peptide bonds in oligopeptides and may therefore assist protein folding. May be implicated in the folding, transport, and assembly of proteins. May play an important role in the regulation of pre-mRNA splicing. In Homo sapiens (Human), this protein is Peptidyl-prolyl cis-trans isomerase G (PPIG).